Consider the following 301-residue polypeptide: GTPase Era (301 aa).

Residues 7–175 form the Era-type G domain; sequence YCGFIAIVGR…AGIVRKHLPE (169 aa). The G1 stretch occupies residues 15-22; that stretch reads GRPNVGKS. 15–22 lines the GTP pocket; the sequence is GRPNVGKS. Residues 41–45 form a G2 region; that stretch reads QTTRH. The segment at 62 to 65 is G3; the sequence is DTPG. GTP contacts are provided by residues 62-66 and 124-127; these read DTPGL and NKVD. A G4 region spans residues 124–127; that stretch reads NKVD. The interval 154-156 is G5; sequence LSA. Positions 198–283 constitute a KH type-2 domain; it reads IREKLMRFLG…HLELWVKVKS (86 aa).

The protein belongs to the TRAFAC class TrmE-Era-EngA-EngB-Septin-like GTPase superfamily. Era GTPase family. As to quaternary structure, monomer.

The protein resides in the cytoplasm. The protein localises to the cell inner membrane. In terms of biological role, an essential GTPase that binds both GDP and GTP, with rapid nucleotide exchange. Plays a role in 16S rRNA processing and 30S ribosomal subunit biogenesis and possibly also in cell cycle regulation and energy metabolism. The sequence is that of GTPase Era from Enterobacter sp. (strain 638).